A 247-amino-acid chain; its full sequence is Probable transcriptional regulatory protein EUBELI_00902 (247 aa).

Belongs to the TACO1 family.

The protein localises to the cytoplasm. This Lachnospira eligens (strain ATCC 27750 / DSM 3376 / VPI C15-48 / C15-B4) (Eubacterium eligens) protein is Probable transcriptional regulatory protein EUBELI_00902.